Reading from the N-terminus, the 314-residue chain is Lipoyl synthase (314 aa).

[4Fe-4S] cluster-binding residues include Cys61, Cys66, Cys72, Cys87, Cys91, Cys94, and Ser301. Positions 73 to 290 constitute a Radical SAM core domain; the sequence is FGRGTATFMI…EEEAKKMGFS (218 aa).

Belongs to the radical SAM superfamily. Lipoyl synthase family. [4Fe-4S] cluster is required as a cofactor.

It is found in the cytoplasm. The catalysed reaction is [[Fe-S] cluster scaffold protein carrying a second [4Fe-4S](2+) cluster] + N(6)-octanoyl-L-lysyl-[protein] + 2 oxidized [2Fe-2S]-[ferredoxin] + 2 S-adenosyl-L-methionine + 4 H(+) = [[Fe-S] cluster scaffold protein] + N(6)-[(R)-dihydrolipoyl]-L-lysyl-[protein] + 4 Fe(3+) + 2 hydrogen sulfide + 2 5'-deoxyadenosine + 2 L-methionine + 2 reduced [2Fe-2S]-[ferredoxin]. It participates in protein modification; protein lipoylation via endogenous pathway; protein N(6)-(lipoyl)lysine from octanoyl-[acyl-carrier-protein]: step 2/2. Its function is as follows. Catalyzes the radical-mediated insertion of two sulfur atoms into the C-6 and C-8 positions of the octanoyl moiety bound to the lipoyl domains of lipoate-dependent enzymes, thereby converting the octanoylated domains into lipoylated derivatives. The sequence is that of Lipoyl synthase from Dechloromonas aromatica (strain RCB).